The primary structure comprises 127 residues: Aspartate 1-decarboxylase (127 aa).

The active-site Schiff-base intermediate with substrate; via pyruvic acid is the Ser25. Ser25 is modified (pyruvic acid (Ser)). Thr57 contributes to the substrate binding site. The active-site Proton donor is the Tyr58. 73 to 75 (GAA) serves as a coordination point for substrate.

Belongs to the PanD family. Heterooctamer of four alpha and four beta subunits. It depends on pyruvate as a cofactor. Post-translationally, is synthesized initially as an inactive proenzyme, which is activated by self-cleavage at a specific serine bond to produce a beta-subunit with a hydroxyl group at its C-terminus and an alpha-subunit with a pyruvoyl group at its N-terminus.

It is found in the cytoplasm. The enzyme catalyses L-aspartate + H(+) = beta-alanine + CO2. It participates in cofactor biosynthesis; (R)-pantothenate biosynthesis; beta-alanine from L-aspartate: step 1/1. Its function is as follows. Catalyzes the pyruvoyl-dependent decarboxylation of aspartate to produce beta-alanine. In Clostridium acetobutylicum (strain ATCC 824 / DSM 792 / JCM 1419 / IAM 19013 / LMG 5710 / NBRC 13948 / NRRL B-527 / VKM B-1787 / 2291 / W), this protein is Aspartate 1-decarboxylase.